The primary structure comprises 503 residues: D-xylose-proton symporter-like 2 (503 aa).

Over residues 1-15 (MALDPEQQQPISSVS) the composition is skewed to polar residues. The interval 1–32 (MALDPEQQQPISSVSREFGKSSGEISPEREPL) is disordered. Ala2 carries the post-translational modification N-acetylalanine. Ser26 is modified (phosphoserine). The next 12 membrane-spanning stretches (helical) occupy residues 42 to 62 (YSVV…LLYG), 99 to 119 (GSLY…DVIG), 124 to 144 (LILA…APTY), 146 to 166 (VLII…HAAP), 187 to 207 (FFIV…VNVH), 213 to 233 (MYAT…WLPA), 305 to 325 (ALII…PSVL), 346 to 366 (VSIL…VVID), 375 to 395 (LGGV…YLFF), 400 to 420 (VVAV…FGPI), 437 to 457 (GLSL…FAFS), and 467 to 487 (ILFC…FFIV).

This sequence belongs to the major facilitator superfamily. Sugar transporter (TC 2.A.1.1) family.

The protein resides in the membrane. The polypeptide is D-xylose-proton symporter-like 2 (Arabidopsis thaliana (Mouse-ear cress)).